Consider the following 470-residue polypeptide: METRKDDMEKRNDKSEPLLLPENGSDVSEEASWMVYLSTIIAVCGSYEFGTCVGYSAPTQFGIMEELNLSYSQFSVFGSILNMGAVLGAITSGKISDFIGRKGAMRLSSVISAIGWLIIYLAKGDVPLDFGRFLTGYGCGTLSFVVPVFIAEISPRKLRGALATLNQLFIVIGLASMFLIGAVVNWRTLALTGVAPCVVLFFGTWFIPESPRWLEMVGRHSDFEIALQKLRGPQANITREAGEIQEYLASLAHLPKATLMDLIDKKNIRFVIVGVGLMFFQQFVGINGVIFYAQQIFVSAGASPTLGSILYSIEQVVLTALGATLLIDRLGRRPLLMASAVGMLIGCLLIGNSFLLKAHGLALDIIPALAVSGVLVYIGSFSIGMGAIPWVIMSEIFPINLKGTAGGLVTVVNWLSSWLVSFTFNFLMIWSPHGTFYVYGGVCVLAIIFIAKLVPETKGRTLEEIQAMMM.

Over residues 1 to 16 (METRKDDMEKRNDKSE) the composition is skewed to basic and acidic residues. The tract at residues 1 to 24 (METRKDDMEKRNDKSEPLLLPENG) is disordered. 12 helical membrane-spanning segments follow: residues 33-53 (WMVYLSTIIAVCGSYEFGTCV), 73-93 (QFSVFGSILNMGAVLGAITSG), 110-130 (VISAIGWLIIYLAKGDVPLDF), 133-153 (FLTGYGCGTLSFVVPVFIAEI), 164-184 (TLNQLFIVIGLASMFLIGAVV), 188-208 (TLALTGVAPCVVLFFGTWFIP), 270-290 (FVIVGVGLMFFQQFVGINGVI), 307-327 (GSILYSIEQVVLTALGATLLI), 335-355 (LLMASAVGMLIGCLLIGNSFL), 373-393 (GVLVYIGSFSIGMGAIPWVIM), 409-429 (VTVVNWLSSWLVSFTFNFLMI), and 434-454 (GTFYVYGGVCVLAIIFIAKLV).

The protein belongs to the major facilitator superfamily. Sugar transporter (TC 2.A.1.1) family.

The protein localises to the membrane. Sugar transporter. The sequence is that of Sugar transporter ERD6-like 8 from Arabidopsis thaliana (Mouse-ear cress).